A 181-amino-acid polypeptide reads, in one-letter code: Anthrone oxygenase encC (181 aa).

4 helical membrane passes run 1–21 (MASV…WLSG), 65–81 (QIAA…AWCA), 88–108 (LLYG…LLFM), and 153–173 (FLAG…LFAA).

The protein belongs to the anthrone oxygenase family. In terms of tissue distribution, endocrocin is specifically produced in conidia.

Its subcellular location is the membrane. In terms of biological role, anthrone oxygenase; part of the gene cluster that mediates the biosynthesis of endocrocin, a simple anthraquinone interesting for many biotechnological applications. The pathway begins with the synthesis of atrochrysone thioester by the polyketide synthase (PKS) encA. The atrochrysone carboxyl ACP thioesterase encB then breaks the thioester bond and releases the atrochrysone carboxylic acid from encA. The atrochrysone carboxylic acid is then converted to endocrocin anthrone which is further oxidized into endocrocin by the anthrone oxygenase encC. The exact function of encD has not been identified yet, but it negatively regulates endocrocin production, likely through the modification of endocrocin itself. The protein is Anthrone oxygenase encC of Aspergillus fumigatus (strain ATCC MYA-4609 / CBS 101355 / FGSC A1100 / Af293) (Neosartorya fumigata).